The primary structure comprises 943 residues: uncharacterized protein (943 aa).

An N-acetylmethionine modification is found at Met-1. Disordered stretches follow at residues 37–63, 152–177, 315–381, 397–472, and 515–546; these read DETP…QQQQ, KHQF…DDEV, LPMN…QQLQ, QNVP…PLKK, and EREA…ESDD. Positions 41–58 are enriched in polar residues; that stretch reads ISRNGNDSNINIQPSSVP. Positions 152–162 are enriched in basic residues; sequence KHQFGKSKKNT. Positions 318-358 are enriched in polar residues; it reads NNYNNHPGQFQNTPPVMPSGQQPPQQPRTLSLTNGPRYSPQ. The segment covering 367–381 has biased composition (low complexity); it reads QQISQRQQQQQQQLQ. Over residues 397–409 the composition is skewed to polar residues; it reads QNVPQGFNPWSPN. Residues 417-433 are compositionally biased toward low complexity; sequence SMKQPISQSSISSKNNS. The segment covering 434 to 470 has biased composition (polar residues); it reads AYSIPNVQNNSLTTFSPSSPTDATAMPNSTKQGSSPL. A compositionally biased stretch (basic and acidic residues) spans 515–533; it reads EREALVEEKEKERAEKNTE. Phosphoserine occurs at positions 553, 586, and 619. Positions 616-639 are disordered; the sequence is EFPSPGKYNSNSDNGEMNTTNEVD. The segment covering 622–639 has biased composition (polar residues); that stretch reads KYNSNSDNGEMNTTNEVD. Residue Ser-649 is modified to Phosphoserine. The interval 654–683 is disordered; it reads IPERDPKRNVSDATIKRRESDGNGRRLSNV. Basic and acidic residues predominate over residues 655 to 677; it reads PERDPKRNVSDATIKRRESDGNG. Residues Ser-681, Ser-766, and Ser-771 each carry the phosphoserine modification.

This is an uncharacterized protein from Saccharomyces cerevisiae (strain ATCC 204508 / S288c) (Baker's yeast).